The primary structure comprises 238 residues: Probable transcriptional regulatory protein SpyM51586 (238 aa).

The protein belongs to the TACO1 family. YeeN subfamily.

The protein resides in the cytoplasm. This is Probable transcriptional regulatory protein SpyM51586 from Streptococcus pyogenes serotype M5 (strain Manfredo).